Reading from the N-terminus, the 410-residue chain is Single Ig IL-1-related receptor (410 aa).

At 1 to 118 (MPGVCDRAPD…TLQRAGPTSH (118 aa)) the chain is on the extracellular side. An Ig-like C2-type domain is found at 9–109 (PDFLSPSEDQ…IQNISFSSFT (101 aa)). 4 N-linked (GlcNAc...) asparagine glycosylation sites follow: Asn-31, Asn-73, Asn-86, and Asn-102. A disulfide bond links Cys-32 and Cys-98. Residues 119–139 (VAAVLASLLVLLALLLAALLY) form a helical; Signal-anchor for type III membrane protein membrane-spanning segment. At 140–410 (VKCRLNVLLW…FYCLVSKDDM (271 aa)) the chain is on the cytoplasmic side. The 145-residue stretch at 163–307 (KLYDAYVSYS…DFWKEVQLAL (145 aa)) folds into the TIR domain. A disordered region spans residues 340–390 (EGRALDSEVDPDPEGDLGVRGPVFGEPSAPPHTSGVSLGESRSSEVDVSDL). Residue Ser-383 is modified to Phosphoserine.

Belongs to the interleukin-1 receptor family. In terms of assembly, interacts with IL1R1, IRAK1, TLR4, TLR5, TLR9 and TRAF6. Upon IL-1 stimulation found in a complex at least composed of IL1R1, SIGIRR, MYD88, IRAK1 and TRAF6. Upon stimulation with LPC found in a complex at least composed of TLR4, SIG1IR, MYD88, IRAK1 and TRAF6. Interacts with PALM3. Mainly expressed in epithelial tissues such as kidney, lung and gut.

The protein resides in the membrane. Its function is as follows. Acts as a negative regulator of the Toll-like and IL-1R receptor signaling pathways. Attenuates the recruitment of receptor-proximal signaling components to the TLR4 receptor, probably through an TIR-TIR domain interaction with TLR4. Through its extracellular domain interferes with the heterodimerization of Il1R1 and IL1RAP. This chain is Single Ig IL-1-related receptor (SIGIRR), found in Homo sapiens (Human).